Consider the following 825-residue polypeptide: Hypoxia-inducible factor 1-alpha (825 aa).

The disordered stretch occupies residues 1-30; the sequence is MEGAGGENEKKKMSSERRKEKSRDAARSRR. Residues 1–401 form an interaction with TSGA10 region; the sequence is MEGAGGENEK…KEPDALTLLA (401 aa). Over residues 7-30 the composition is skewed to basic and acidic residues; it reads ENEKKKMSSERRKEKSRDAARSRR. Residues 17–70 enclose the bHLH domain; sequence RRKEKSRDAARSRRSKESEVFYELAHQLPLPHNVSSHLDKASVMRLTISYLRVR. A DNA-binding region spans residues 21–30; that stretch reads KSRDAARSRR. The PAS 1 domain occupies 85 to 158; that stretch reads KAQMNCFYLK…THRNGPVRKG (74 aa). The segment at 170–191 is required for heterodimer formation with ARNT; it reads RMKCTLTSRGRTMNIKSATWKV. The PAS 2 domain occupies 228–298; sequence PHPSNIEIPL…KTHHDMFTKG (71 aa). Residue Ser-247 is modified to Phosphoserine; by CK1. The region spanning 302-345 is the PAC domain; the sequence is TGQYRMLAKRGGYVWVETQATVIYNTKDSQPQCIVCVNYVVSGI. The tract at residues 401–602 is ODD; that stretch reads APAAGDTIIS…STVTGFQQTQ (202 aa). Pro-402 is subject to 4-hydroxyproline. Residues 492–516 are compositionally biased toward polar residues; the sequence is QIQDQPASPSDGSTRQSSPEPNSPS. Residues 492 to 520 form a disordered region; that stretch reads QIQDQPASPSDGSTRQSSPEPNSPSEYCF. Residues 530 to 574 form an NTAD region; that stretch reads FKLELVEKLFAEDTEAKNPFSAQDTDLDLEMLAPYIPMDDDFQLR. An N6-acetyllysine; alternate modification is found at Lys-531. Lys-531 is covalently cross-linked (Glycyl lysine isopeptide (Lys-Gly) (interchain with G-Cter in ubiquitin); alternate). Residues Lys-537 and Lys-546 each participate in a glycyl lysine isopeptide (Lys-Gly) (interchain with G-Cter in ubiquitin) cross-link. Ser-550 bears the Phosphoserine; by GSK3-beta mark. Thr-554 is subject to Phosphothreonine; by GSK3-beta. Pro-563 bears the 4-hydroxyproline mark. A Phosphoserine; by PLK3 modification is found at Ser-575. Positions 575–784 are ID; the sequence is SFDQLSPLES…SDLACRLLGQ (210 aa). 2 disordered regions span residues 579-602 and 654-674; these read LSPL…QQTQ and AKAS…RAGK. Ser-588 is subject to Phosphoserine; by GSK3-beta. Residues 654-667 show a composition bias toward polar residues; the sequence is AKASAYSGTHSRTA. At Ser-657 the chain carries Phosphoserine; by PLK3. The short motif at 717-721 is the Nuclear localization signal element; that stretch reads RKRKM. The tract at residues 785–825 is CTAD; it reads SMDESGLPQLTSYDCEVNAPIQGSRNLLQGEELLRALDQVN. An S-nitrosocysteine modification is found at Cys-799. The residue at position 802 (Asn-802) is a (3S)-3-hydroxyasparagine.

In terms of assembly, interacts with the ARNT; forms a heterodimer that binds core DNA sequence 5'-TACGTG-3' within the hypoxia response element (HRE) of target gene promoters. Interacts with COPS5; the interaction increases the transcriptional activity of HIF1A through increased stability. Interacts with EP300 (via TAZ-type 1 domains); the interaction is stimulated in response to hypoxia and inhibited by CITED2. Interacts with CREBBP (via TAZ-type 1 domains). Interacts with NCOA1, NCOA2, APEX1 and HSP90. Interacts (hydroxylated within the ODD domain) with VHLL (via beta domain); the interaction, leads to polyubiquitination and subsequent HIF1A proteasomal degradation. During hypoxia, sumoylated HIF1A also binds VHL; the interaction promotes the ubiquitination of HIF1A. Interacts with SENP1; the interaction desumoylates HIF1A resulting in stabilization and activation of transcription. Interacts (via the ODD domain) with NAA10; the interaction appears not to acetylate HIF1A nor have any affect on protein stability, during hypoxia. Interacts with RWDD3; the interaction enhances HIF1A sumoylation. Interacts with TSGA10. Interacts with HIF3A. Interacts with RORA (via the DNA binding domain); the interaction enhances HIF1A transcription under hypoxia through increasing protein stability. Interaction with PSMA7 inhibits the transactivation activity of HIF1A under both normoxic and hypoxia-mimicking conditions. Interacts with USP20. Interacts with RACK1; promotes HIF1A ubiquitination and proteasome-mediated degradation. Interacts (via N-terminus) with USP19. Interacts with SIRT2. Interacts (deacetylated form) with EGLN1. Interacts with CBFA2T3. Interacts with HSP90AA1 and HSP90AB1. Interacts with DCUN1D1; this interaction increases the interaction between VHL and DCUN1D1. Interacts with HIF1AN. In terms of processing, S-nitrosylation of Cys-799 may be responsible for increased recruitment of p300 coactivator necessary for transcriptional activity of HIF-1 complex. Acetylation of Lys-531 by ARD1 increases interaction with VHL and stimulates subsequent proteasomal degradation. Deacetylated by SIRT2 increases its interaction with and hydroxylation by EGLN1 thereby inactivating HIF1A activity by inducing its proteasomal degradation. Post-translationally, ubiquitinated; in normoxia, following hydroxylation and interaction with VHL. Lys-531 appears to be the principal site of ubiquitination. Clioquinol, the Cu/Zn-chelator, inhibits ubiquitination through preventing hydroxylation at Asn-802. Ubiquitinated by E3 ligase VHL. Deubiquitinated by UCHL1. In terms of processing, requires phosphorylation for DNA-binding. Phosphorylation at Ser-247 by CSNK1D/CK1 represses kinase activity and impairs ARNT binding. Phosphorylation by GSK3-beta and PLK3 promote degradation by the proteasome. The iron and 2-oxoglutarate dependent 3-hydroxylation of asparagine is (S) stereospecific within HIF CTAD domains. Post-translationally, sumoylated; with SUMO1 under hypoxia. Sumoylation is enhanced through interaction with RWDD3. Both sumoylation and desumoylation seem to be involved in the regulation of its stability during hypoxia. Sumoylation can promote either its stabilization or its VHL-dependent degradation by promoting hydroxyproline-independent HIF1A-VHL complex binding, thus leading to HIF1A ubiquitination and proteasomal degradation. Desumoylation by SENP1 increases its stability amd transcriptional activity. There is a disaccord between various publications on the effect of sumoylation and desumoylation on its stability and transcriptional activity. In terms of processing, in normoxia, is hydroxylated on Pro-402 and Pro-563 in the oxygen-dependent degradation domain (ODD) by EGLN1/PHD2 and EGLN2/PHD1. EGLN3/PHD3 has also been shown to hydroxylate Pro-563. The hydroxylated prolines promote interaction with VHL, initiating rapid ubiquitination and subsequent proteasomal degradation. Deubiquitinated by USP20. Under hypoxia, proline hydroxylation is impaired and ubiquitination is attenuated, resulting in stabilization. In normoxia, is hydroxylated on Asn-802 by HIF1AN, thus abrogating interaction with CREBBP and EP300 and preventing transcriptional activation. Repressed by iron ion, via Fe(2+) prolyl hydroxylase (PHD) enzymes-mediated hydroxylation and subsequent proteasomal degradation. Expressed in the kidney, higher expression is seen in the renal medulla than in the cortex. Expressed also in the perivenous zone of the liver.

It localises to the cytoplasm. The protein localises to the nucleus. Its subcellular location is the nucleus speckle. Induced by reactive oxygen species (ROS). Functionally, functions as a master transcriptional regulator of the adaptive response to hypoxia. Under hypoxic conditions, activates the transcription of over 40 genes, including erythropoietin, glucose transporters, glycolytic enzymes, vascular endothelial growth factor, HILPDA, and other genes whose protein products increase oxygen delivery or facilitate metabolic adaptation to hypoxia. Plays an essential role in embryonic vascularization, tumor angiogenesis and pathophysiology of ischemic disease. Heterodimerizes with ARNT; heterodimer binds to core DNA sequence 5'-TACGTG-3' within the hypoxia response element (HRE) of target gene promoters. Activation requires recruitment of transcriptional coactivators such as CREBBP and EP300. Activity is enhanced by interaction with NCOA1 and/or NCOA2. Interaction with redox regulatory protein APEX1 seems to activate CTAD and potentiates activation by NCOA1 and CREBBP. Involved in the axonal distribution and transport of mitochondria in neurons during hypoxia. The polypeptide is Hypoxia-inducible factor 1-alpha (Hif1a) (Rattus norvegicus (Rat)).